The chain runs to 289 residues: Acetyl-coenzyme A carboxylase carboxyl transferase subunit beta (289 aa).

One can recognise a CoA carboxyltransferase N-terminal domain in the interval 28–289 (VMTKCPKCKK…QGGEMAVWQS (262 aa)). Zn(2+) contacts are provided by Cys-32, Cys-35, Cys-51, and Cys-54. The segment at 32-54 (CPKCKKIMYTKELLKNLKVCVNC) adopts a C4-type zinc-finger fold.

Belongs to the AccD/PCCB family. As to quaternary structure, acetyl-CoA carboxylase is a heterohexamer composed of biotin carboxyl carrier protein (AccB), biotin carboxylase (AccC) and two subunits each of ACCase subunit alpha (AccA) and ACCase subunit beta (AccD). Zn(2+) serves as cofactor.

It localises to the cytoplasm. The catalysed reaction is N(6)-carboxybiotinyl-L-lysyl-[protein] + acetyl-CoA = N(6)-biotinyl-L-lysyl-[protein] + malonyl-CoA. It functions in the pathway lipid metabolism; malonyl-CoA biosynthesis; malonyl-CoA from acetyl-CoA: step 1/1. Its function is as follows. Component of the acetyl coenzyme A carboxylase (ACC) complex. Biotin carboxylase (BC) catalyzes the carboxylation of biotin on its carrier protein (BCCP) and then the CO(2) group is transferred by the transcarboxylase to acetyl-CoA to form malonyl-CoA. The protein is Acetyl-coenzyme A carboxylase carboxyl transferase subunit beta of Bacillus cereus (strain ATCC 10987 / NRS 248).